We begin with the raw amino-acid sequence, 308 residues long: D-alanine--D-alanine ligase (308 aa).

The ATP-grasp domain maps to 105–302; the sequence is KAIFRSLGLA…FPDLCERILD (198 aa). 133 to 188 lines the ATP pocket; that stretch reads DLPFGLPCVVKPAGEGSSVGVHLVNEAAELGPACRDAASHAGDVIVERYVKGTEVD. The Mg(2+) site is built by Asp256, Glu269, and Asn271.

Belongs to the D-alanine--D-alanine ligase family. Requires Mg(2+) as cofactor. It depends on Mn(2+) as a cofactor.

The protein localises to the cytoplasm. The catalysed reaction is 2 D-alanine + ATP = D-alanyl-D-alanine + ADP + phosphate + H(+). Its pathway is cell wall biogenesis; peptidoglycan biosynthesis. Its function is as follows. Cell wall formation. The sequence is that of D-alanine--D-alanine ligase from Anaeromyxobacter sp. (strain K).